The sequence spans 323 residues: tRNA U34 carboxymethyltransferase (323 aa).

Residues K91, W105, K110, G130, 152–154 (DPT), 181–182 (IE), M196, Y200, and R315 contribute to the carboxy-S-adenosyl-L-methionine site.

Belongs to the class I-like SAM-binding methyltransferase superfamily. CmoB family. In terms of assembly, homotetramer.

It catalyses the reaction carboxy-S-adenosyl-L-methionine + 5-hydroxyuridine(34) in tRNA = 5-carboxymethoxyuridine(34) in tRNA + S-adenosyl-L-homocysteine + H(+). Functionally, catalyzes carboxymethyl transfer from carboxy-S-adenosyl-L-methionine (Cx-SAM) to 5-hydroxyuridine (ho5U) to form 5-carboxymethoxyuridine (cmo5U) at position 34 in tRNAs. This Photorhabdus laumondii subsp. laumondii (strain DSM 15139 / CIP 105565 / TT01) (Photorhabdus luminescens subsp. laumondii) protein is tRNA U34 carboxymethyltransferase.